Here is a 241-residue protein sequence, read N- to C-terminus: 1-(5-phosphoribosyl)-5-[(5-phosphoribosylamino)methylideneamino] imidazole-4-carboxamide isomerase (241 aa).

The active-site Proton acceptor is Asp-12. Asp-133 serves as the catalytic Proton donor.

It belongs to the HisA/HisF family.

It localises to the cytoplasm. The catalysed reaction is 1-(5-phospho-beta-D-ribosyl)-5-[(5-phospho-beta-D-ribosylamino)methylideneamino]imidazole-4-carboxamide = 5-[(5-phospho-1-deoxy-D-ribulos-1-ylimino)methylamino]-1-(5-phospho-beta-D-ribosyl)imidazole-4-carboxamide. Its pathway is amino-acid biosynthesis; L-histidine biosynthesis; L-histidine from 5-phospho-alpha-D-ribose 1-diphosphate: step 4/9. The sequence is that of 1-(5-phosphoribosyl)-5-[(5-phosphoribosylamino)methylideneamino] imidazole-4-carboxamide isomerase from Persephonella marina (strain DSM 14350 / EX-H1).